The following is a 128-amino-acid chain: UPF0292 protein MJ1624 (128 aa).

The 83-residue stretch at 23–105 (EKPIIVEGKR…KVNTKIRHEI (83 aa)) folds into the Toprim domain. Glu-29, Asp-74, and Asp-76 together coordinate Mg(2+).

This sequence belongs to the UPF0292 family. Requires Mg(2+) as cofactor.

In Methanocaldococcus jannaschii (strain ATCC 43067 / DSM 2661 / JAL-1 / JCM 10045 / NBRC 100440) (Methanococcus jannaschii), this protein is UPF0292 protein MJ1624.